The sequence spans 500 residues: MRRSIVIVIALTAKGFLHRHLLEKGNLVTALSLRICNSRAFSGRSDYRERLRSGLHSIKFNDALTLFCDMAESHPLPSIVDFSRLLIAIAKLNKYEAVISLFRHLEMLGISHDLYSFTTLIDCFCRCARLSLALSCLGKMMKLGFEPSIVTFGSLVNGFCHVNRFYEAMSLVDQIVGLGYEPNVVIYNTIIDSLCEKGQVNTALDVLKHMKKMGIRPDVVTYNSLITRLFHSGTWGVSARILSDMMRMGISPDVITFSALIDVYGKEGQLLEAKKQYNEMIQRSVNPNIVTYNSLINGLCIHGLLDEAKKVLNVLVSKGFFPNAVTYNTLINGYCKAKRVDDGMKILCVMSRDGVDGDTFTYNTLYQGYCQAGKFSAAEKVLGRMVSCGVHPDMYTFNILLDGLCDHGKIGKALVRLEDLQKSKTVVGIITYNIIIKGLCKADKVEDAWYLFCSLALKGVSPDVITYITMMIGLRRKRLWREAHELYRKMQKEDGLMPIK.

PPR repeat units follow at residues 78–112, 113–147, 148–182, 183–217, 218–252, 253–287, 288–322, 323–357, 358–392, 393–427, 428–462, and 463–498; these read SIVD…GISH, DLYS…GFEP, SIVT…GYEP, NVVI…GIRP, DVVT…GISP, DVIT…SVNP, NIVT…GFFP, NAVT…GVDG, DTFT…GVHP, DMYT…KTVV, GIIT…GVSP, and DVIT…GLMP.

It belongs to the PPR family. P subfamily.

The protein is Pentatricopeptide repeat-containing protein At1g06580 of Arabidopsis thaliana (Mouse-ear cress).